The chain runs to 186 residues: ADP-ribosylation factor-like protein 6 (186 aa).

Residue G2 is the site of N-myristoyl glycine attachment. GTP is bound by residues 24 to 31 (GLDNSGKT), 69 to 73 (DMSGQ), and 130 to 133 (NKMD).

It belongs to the small GTPase superfamily. Arf family. In terms of assembly, interacts with SEC61B, ARL6IP1, ARL6IP2, ARL6IP3, ARL6IP4 ARL6IP5 and ARL6IP6. Interacts (GTP-bound form) with the BBSome a complex that contains BBS1, BBS2, BBS4, BBS5, BBS7, BBS8/TTC8, BBS9 and BBIP10. Interacts (GTP-free form) with IFT27.

It is found in the cell projection. The protein localises to the cilium membrane. It localises to the cytoplasm. The protein resides in the cytoskeleton. Its subcellular location is the cilium axoneme. It is found in the cilium basal body. In terms of biological role, involved in membrane protein trafficking at the base of the ciliary organelle. Mediates recruitment onto plasma membrane of the BBSome complex which would constitute a coat complex required for sorting of specific membrane proteins to the primary cilia. Together with the BBSome complex and LTZL1, controls SMO ciliary trafficking and contributes to the sonic hedgehog (SHH) pathway regulation. May regulate cilia assembly and disassembly and subsequent ciliary signaling events such as the Wnt signaling cascade. Isoform 2 may be required for proper retinal function and organization. The chain is ADP-ribosylation factor-like protein 6 (ARL6) from Bos taurus (Bovine).